The sequence spans 180 residues: Translation initiation factor IF-3 (180 aa).

The protein belongs to the IF-3 family. In terms of assembly, monomer.

Its subcellular location is the cytoplasm. Functionally, IF-3 binds to the 30S ribosomal subunit and shifts the equilibrium between 70S ribosomes and their 50S and 30S subunits in favor of the free subunits, thus enhancing the availability of 30S subunits on which protein synthesis initiation begins. The polypeptide is Translation initiation factor IF-3 (Salmonella typhimurium (strain LT2 / SGSC1412 / ATCC 700720)).